Consider the following 1410-residue polypeptide: MECIGKRVKSRSWQRLQAVNKRKKMETVAPVTSPPKKRRQKKPKNYDSDIEDITPTCNDSVPPPQVSNMYSVPNNSVKESFSRIMRDLNVEKKSGPSSSRLTDGSEQNPCLKERSFRVSDLGVEKKCSPEITDLDVGIPVPRFSKLKDVSEQKNTCLMQKSSPEIADLDLVISVPSSSVLKDVSEEIRFLKDKCSPEIRGLVLEKSVPGEIEILSDSESETEARRRASAKKKLFEESSRIVESISDGEDSSSETDEEEEENQDSEDNNTKDNVTVESLSSEDPSSSSSSSSSSSSSSSSSSSDDESYVKEVVGDNRDDDDLRKASSPIKRVSLVERKALVRYKRSGSSLTKPRERDNKIQKLNHREEEKKERQREVVRVVTKQPSNVVYTCAHCGKENTGNPESHSSFIRPHSIRDEIEDVNNFASTNVSKYEDSVSINSGKTTGAPSRPEVENPETGKELNTPEKPSISRPEIFTTEKAIDVQVPEEPSRPEIYSSEKAKEVQAPEMPSRPEVFSSEKAKEIQVPEMPSIPEIQNSEKAKEVQANNRMGLTTPAVAEGLNKSVVTNEHIEDDSDSSISSGDGYESDPTLKDKEVKINNHSDWRILNGNNKEVDLFRLLVNSVWEKGQLGEEDEADELVSSAEDQSQEQAREDHRKYDDAGLLIIRPPPLIEKFGVEEPQSPPVVSEIDSEEDRLWEELAFFTKSNDIGGNELFSNVEKNISANETPAAQCKKGKHDLCIDLEVGLKCMHCGFVEREIRSMDVSEWGEKTTRERRKFDRFEEEEGSSFIGKLGFDAPNNSLNEGCVSSEGTVWDKIPGVKSQMYPHQQEGFEFIWKNLAGTIMLNELKDFENSDETGGCIMSHAPGTGKTRLTIIFLQAYLQCFPDCKPVIIAPASLLLTWAEEFKKWNISIPFHNLSSLDFTGKENSAALGLLMQKNATARSNNEIRMVKIYSWIKSKSILGISYNLYEKLAGVKDEDKKTKMVREVKPDKELDDIREILMGRPGLLVLDEAHTPRNQRSCIWKTLSKVETQKRILLSGTPFQNNFLELCNVLGLARPKYLERLTSTLKKSGMTVTKRGKKNLGNEINNRGIEELKAVMLPFVHVHKGSILQSSLPGLRECVVVLNPPELQRRVLESIEVTHNRKTKNVFETEHKLSLVSVHPSLVSRCKISEKERLSIDEALLAQLKKVRLDPNQSVKTRFLMEFVELCEVIKEKVLVFSQYIDPLKLIMKHLVSRFKWNPGEEVLYMHGKLEQKQRQTLINEFNDPKSKAKVFLASTKACSEGISLVGASRVILLDVVWNPAVERQAISRAYRIGQKRIVYTYHLVAKGTPEGPKYCKQAQKDRISELVFACSSRHDKGKEKIAEAVTEDKVLDTMVEHSKLGDMFDNLIVQPKEADLVEGFSILMP.

Positions 1 to 12 (MECIGKRVKSRS) are enriched in basic residues. 6 disordered regions span residues 1–74 (MECI…SVPN), 87–108 (DLNV…SEQN), 209–330 (GEIE…PIKR), 344–376 (RSGS…QREV), 428–593 (NVSK…LKDK), and 632–654 (EDEA…REDH). The Nuclear localization signal 1 motif lies at 22 to 29 (RKKMETVA). A compositionally biased stretch (polar residues) spans 95 to 108 (GPSSSRLTDGSEQN). The span at 245 to 266 (SDGEDSSSETDEEEEENQDSED) shows a compositional bias: acidic residues. Residues 248 to 278 (EDSSSETDEEEEENQDSEDNNTKDNVTVESL) are a coiled coil. Over residues 276 to 301 (ESLSSEDPSSSSSSSSSSSSSSSSSS) the composition is skewed to low complexity. Basic and acidic residues predominate over residues 306-323 (SYVKEVVGDNRDDDDLRK). A Nuclear localization signal 2 motif is present at residues 328–335 (IKRVSLVE). Basic and acidic residues predominate over residues 351-376 (KPRERDNKIQKLNHREEEKKERQREV). Positions 356–377 (DNKIQKLNHREEEKKERQREVV) form a coiled coil. The segment covering 428–446 (NVSKYEDSVSINSGKTTGA) has biased composition (polar residues). Basic and acidic residues-rich tracts occupy residues 450 to 463 (PEVE…ELNT) and 488 to 504 (EPSR…KEVQ). Low complexity predominate over residues 576–587 (SSISSGDGYESD). Positions 850 to 1060 (FENSDETGGC…CNVLGLARPK (211 aa)) constitute a Helicase ATP-binding domain. ATP is bound at residue 863–870 (HAPGTGKT). Positions 1011–1014 (DEAH) match the DEAH box motif. The Nuclear localization signal 3 motif lies at 1132–1139 (QRRVLESI). In terms of domain architecture, Helicase C-terminal spans 1206-1359 (EFVELCEVIK…ELVFACSSRH (154 aa)).

Belongs to the SNF2/RAD54 helicase family. As to quaternary structure, interacts with NRPD1.

It is found in the nucleus. In terms of biological role, probable chromatin remodeling factor. This is SNF2 domain-containing protein CLASSY 3 (CLSY3) from Arabidopsis thaliana (Mouse-ear cress).